The primary structure comprises 379 residues: tRNA-specific 2-thiouridylase MnmA (379 aa).

ATP-binding positions include alanine 9–serine 16 and methionine 35. The tract at residues asparagine 94 to aspartate 96 is interaction with target base in tRNA. The Nucleophile role is filled by cysteine 99. The cysteines at positions 99 and 195 are disulfide-linked. Glycine 123 is a binding site for ATP. Positions lysine 145 to glutamine 147 are interaction with tRNA. Cysteine 195 (cysteine persulfide intermediate) is an active-site residue. The interval arginine 307–tyrosine 308 is interaction with tRNA.

It belongs to the MnmA/TRMU family.

It is found in the cytoplasm. The catalysed reaction is S-sulfanyl-L-cysteinyl-[protein] + uridine(34) in tRNA + AH2 + ATP = 2-thiouridine(34) in tRNA + L-cysteinyl-[protein] + A + AMP + diphosphate + H(+). Functionally, catalyzes the 2-thiolation of uridine at the wobble position (U34) of tRNA, leading to the formation of s(2)U34. The polypeptide is tRNA-specific 2-thiouridylase MnmA (Xylella fastidiosa (strain M12)).